The sequence spans 217 residues: Probable GTP-binding protein EngB (217 aa).

In terms of domain architecture, EngB-type G spans 37–214; sequence DGVEIAFAGR…RAAMAKLLEE (178 aa). GTP is bound by residues 45–52, 72–76, 92–95, 159–162, and 193–195; these read GRSNVGKS, GRTQE, DMPG, TKAD, and TSS. Positions 52 and 74 each coordinate Mg(2+).

Belongs to the TRAFAC class TrmE-Era-EngA-EngB-Septin-like GTPase superfamily. EngB GTPase family. It depends on Mg(2+) as a cofactor.

Necessary for normal cell division and for the maintenance of normal septation. The protein is Probable GTP-binding protein EngB of Bradyrhizobium diazoefficiens (strain JCM 10833 / BCRC 13528 / IAM 13628 / NBRC 14792 / USDA 110).